The following is a 990-amino-acid chain: Presequence protease, mitochondrial (990 aa).

Residues 1-56 (MLRFQRTVPRVAIRRLANVYSEGAVLHGYKVRRAQEIPEMRMAAVELEHEMTGARH) constitute a mitochondrion transit peptide. Position 84 (histidine 84) interacts with Zn(2+). Glutamate 87 (proton acceptor) is an active-site residue. Histidine 88 provides a ligand contact to Zn(2+). Glutamate 160 is an active-site residue. Residue glutamate 185 participates in Zn(2+) binding.

It belongs to the peptidase M16 family. PreP subfamily. As to quaternary structure, monomer and homodimer; homodimerization is induced by binding of the substrate. It depends on Zn(2+) as a cofactor.

Its subcellular location is the mitochondrion intermembrane space. The protein localises to the mitochondrion matrix. Its function is as follows. Degrades mitochondrial transit peptides after their cleavage in the intermembrane space or in the matrix, and presequence peptides; clearance of these peptides is required to keep the presequence processing machinery running. Preferentially cleaves the N-terminal side of paired basic amino acid residues. Also degrades other unstructured peptides. May function as an ATP-dependent peptidase as opposed to a metalloendopeptidase. This is Presequence protease, mitochondrial (CYM1) from Eremothecium gossypii (strain ATCC 10895 / CBS 109.51 / FGSC 9923 / NRRL Y-1056) (Yeast).